The primary structure comprises 549 residues: Leiomodin-2 (549 aa).

The interval 1–42 (MSTFGYRRGLSKYESIDEDELLASLTAEELKELERELEDIEP) is tropomyosin-binding. The interval 1–47 (MSTFGYRRGLSKYESIDEDELLASLTAEELKELERELEDIEPDRNLP) is interaction with tropomyosin alpha. 3 interaction with actin regions span residues 1 to 164 (MSTF…PDNS), 165 to 499 (KPKT…KEIK), and 523 to 542 (AHEN…LRRV). Phosphoserine is present on residues Ser-11, Ser-15, and Ser-24. 4 disordered regions span residues 91 to 166 (KLAE…NSKP), 179 to 200 (TNGN…HPCG), 358 to 455 (MDKQ…PGKK), and 469 to 534 (ESAQ…IRGS). 2 stretches are compositionally biased toward acidic residues: residues 95–105 (EDKEESEEELI) and 113–143 (VSEE…EEVT). 2 stretches are compositionally biased toward polar residues: residues 150–163 (INGT…NPDN) and 179–192 (TNGN…NTES). Over residues 358–376 (MDKQRQKRMQEQKQQEGHD) the composition is skewed to basic and acidic residues. The segment covering 390–401 (TPGSSPYASPRQ) has biased composition (polar residues). Ser-406 carries the post-translational modification Phosphoserine. The span at 420-452 (PPSPVAPPPPPPPPPLPPHMLPPPPPPPAPPLP) shows a compositional bias: pro residues. A coiled-coil region spans residues 457-515 (ITRNIAEVIKQQESAQRALQNGQRKKKGKKVKKQPNNILKEIKNSLRSVQEKKMEESSR). A compositionally biased stretch (polar residues) spans 469-478 (ESAQRALQNG). Over residues 479 to 489 (QRKKKGKKVKK) the composition is skewed to basic residues. Positions 496 to 514 (KEIKNSLRSVQEKKMEESS) are enriched in basic and acidic residues. The 20-residue stretch at 523–542 (AHENLMEAIRGSSIRQLRRV) folds into the WH2 domain.

Belongs to the tropomodulin family. In terms of assembly, can bind at least three actin monomers and thereby provides a nucleus for actin filament formation. Interacts (via N-terminus) with tropomyosin alpha (TPM1) (via N-terminus). May also interact with TPM2 (via N-terminus). Interacts with FLII.

Its subcellular location is the cytoplasm. The protein resides in the myofibril. It is found in the sarcomere. It localises to the m line. The protein localises to the cytoskeleton. In terms of biological role, mediates nucleation of actin filaments and thereby promotes actin polymerization. Plays a role in the regulation of actin filament length. Required for normal sarcomere organization in the heart, and for normal heart function. This chain is Leiomodin-2 (Lmod2), found in Rattus norvegicus (Rat).